Consider the following 216-residue polypeptide: Kynurenine formamidase (216 aa).

Trp25 is a binding site for substrate. Zn(2+) is bound by residues His55, His59, and Asp61. His65 acts as the Proton donor/acceptor in catalysis. 2 residues coordinate Zn(2+): His167 and Glu179.

Belongs to the Cyclase 1 superfamily. KynB family. Homodimer. Requires Zn(2+) as cofactor.

It carries out the reaction N-formyl-L-kynurenine + H2O = L-kynurenine + formate + H(+). The protein operates within amino-acid degradation; L-tryptophan degradation via kynurenine pathway; L-kynurenine from L-tryptophan: step 2/2. Its function is as follows. Catalyzes the hydrolysis of N-formyl-L-kynurenine to L-kynurenine, the second step in the kynurenine pathway of tryptophan degradation. In Cupriavidus necator (strain ATCC 17699 / DSM 428 / KCTC 22496 / NCIMB 10442 / H16 / Stanier 337) (Ralstonia eutropha), this protein is Kynurenine formamidase.